Here is a 174-residue protein sequence, read N- to C-terminus: Streptothricin acetyltransferase (174 aa).

The N-acetyltransferase domain maps to 20-170 (FIVREVFDVH…AMYWYWFSGA (151 aa)).

The protein belongs to the acetyltransferase family. GNAT subfamily.

The catalysed reaction is streptothricin F + acetyl-CoA = N(beta)-acetylstreptothricin F + CoA + H(+). Its function is as follows. Involved in resistance to streptothricin, a broad-spectrum antibiotic produced by streptomycetes. Detoxifies streptothricin via acetylation of the beta amino group of the first beta-lysyl moiety of streptothricin. The chain is Streptothricin acetyltransferase (sat-1) from Escherichia coli.